Here is a 170-residue protein sequence, read N- to C-terminus: AP-5 complex subunit sigma-1 (170 aa).

Probably part of the adaptor protein complex 5 (AP-5) a tetramer composed of AP5B1, AP5M1, AP5S1 and AP5Z1. Interacts with ZFYVE26 and SPG11.

Its subcellular location is the cytoplasm. It localises to the cytosol. The protein localises to the late endosome membrane. It is found in the lysosome membrane. In terms of biological role, as part of AP-5, a probable fifth adaptor protein complex it may be involved in endosomal transport. The protein is AP-5 complex subunit sigma-1 (Ap5s1) of Mus musculus (Mouse).